The sequence spans 372 residues: Cyclin-dependent kinase 9 (372 aa).

A Protein kinase domain is found at 19-315 (YEKLAKIGQG…SDDALNHDFF (297 aa)). Residue 25-33 (IGQGTFGEV) participates in ATP binding. The residue at position 44 (Lys44) is an N6-acetyllysine; by EP300/CBP, PCAF/KAT2B and GCN5/KAT2A. ATP-binding positions include Lys48 and 104-106 (DFC). Residue Lys48 is modified to N6-acetyllysine; by PCAF/KAT2B and GCN5/KAT2A. Asp149 serves as the catalytic Proton acceptor. The tract at residues 166 to 191 (ADFGLARAFSLAKNSQPNRYTNRVVT) is T-loop. Residue Asp167 coordinates ATP. Ser175 carries the post-translational modification Phosphoserine. At Thr186 the chain carries Phosphothreonine; by CaMK1D. The tract at residues 343–372 (RRKGSQITQQSTNQSRNPATTNQTEFERVF) is disordered. At Ser347 the chain carries Phosphoserine; by CDK9 and PKA. Positions 347-366 (SQITQQSTNQSRNPATTNQT) are enriched in polar residues. The residue at position 350 (Thr350) is a Phosphothreonine; by CDK9. Ser353 carries the post-translational modification Phosphoserine; by CDK9. A Phosphothreonine; by CDK9 modification is found at Thr354. Ser357 carries the phosphoserine; by CDK9 modification. 2 positions are modified to phosphothreonine; by CDK9: Thr362 and Thr363.

Belongs to the protein kinase superfamily. CMGC Ser/Thr protein kinase family. CDC2/CDKX subfamily. Component of the super elongation complex (SEC), at least composed of EAF1, EAF2, CDK9, MLLT3/AF9, AFF (AFF1 or AFF4), the P-TEFb complex and ELL (ELL, ELL2 or ELL3). Associates with CCNT1/cyclin-T1, CCNT2/cyclin-T2 (isoform A and isoform B) or CCNK/cyclin-K to form active P-TEFb. P-TEFb forms a complex with AFF4/AF5Q31 and is part of the super elongation complex (SEC). Component of a complex which is composed of at least 5 members: HTATSF1/Tat-SF1, P-TEFb complex, RNA pol II, SUPT5H, and NCL/nucleolin. Associates with UBR5 and forms a transcription regulatory complex composed of CDK9, RNAP II, UBR5 and TFIIS/TCEA1 that can stimulate target gene transcription (e.g. gamma fibrinogen/FGG) by recruiting their promoters. Component of the 7SK snRNP inactive complex which is composed of at least 8 members: P-TEFb (composed of CDK9 and CCNT1/cyclin-T1), HEXIM1, HEXIM2, LARP7, BCDIN3, SART3 proteins and 7SK and U6 snRNAs. This inactive 7SK snRNP complex can also interact with NCOR1 and HDAC3, probably to regulate CDK9 acetylation. Release of P-TEFb from P-TEFb/7SK snRNP complex requires both PP2B to transduce calcium Ca(2+) signaling in response to stimuli (e.g. UV or hexamethylene bisacetamide (HMBA)), and PPP1CA to dephosphorylate Thr-186. This released P-TEFb remains inactive in the pre-initiation complex with BRD4 until new Thr-186 phosphorylation occurs after the synthesis of a short RNA. Interacts with BRD4; to target chromatin binding. Interacts with JMJD6. Interacts with activated nuclear STAT3 and RELA/p65. Binds to AR and MYOD1. Forms a complex composed of CDK9, CCNT1/cyclin-T1, EP300 and GATA4 that stimulates hypertrophy in cardiomyocytes. The large PER complex involved in the repression of transcriptional termination is composed of at least PER2, CDK9, DDX5, DHX9, NCBP1 and POLR2A (active). Interacts with HSF1. Interacts with TBX21. Interacts with WDR43. Interacts with ZMYND8; the association appears to occur between homodimeric ZMYND8 and the activated form of the P-TEFb complex. Post-translationally, autophosphorylation at Thr-186, Ser-347, Thr-350, Ser-353, Thr-354 and Ser-357 triggers kinase activity by promoting cyclin and substrate binding upon conformational changes. Thr-186 phosphorylation requires the calcium Ca(2+) signaling pathway, including CaMK1D and calmodulin. This inhibition is relieved by Thr-29 dephosphorylation. Phosphorylation at Ser-175 inhibits kinase activity. Can be phosphorylated on either Thr-362 or Thr-363 but not on both simultaneously. In terms of processing, dephosphorylation of Thr-186 by PPM1A and PPM1B blocks CDK9 activity and may lead to CDK9 proteasomal degradation. However, PPP1CA-mediated Thr-186 dephosphorylation is required to release P-TEFb from its inactive P-TEFb/7SK snRNP complex. Dephosphorylated at Ser-347 by the PNUTS-PP1 complex during RNA polymerase II transcription pause-release. Dephosphorylation of C-terminus Thr and Ser residues by protein phosphatase-1 (PP1) triggers CDK9 activity. N6-acetylation of Lys-44 promotes kinase activity, whereas acetylation of both Lys-44 and Lys-48 mediated by PCAF/KAT2B and GCN5/KAT2A reduces kinase activity. The acetylated form associates with PML bodies in the nuclear matrix and with the transcriptionally silent HIV-1 genome; deacetylated upon transcription stimulation. Deacetylated by SIRT7, promoting the kinase activity and subsequent 'Ser-2' phosphorylation of the C-terminal domain (CTD) of RNA polymerase II. Post-translationally, polyubiquitinated and thus activated by UBR5. This ubiquitination is promoted by TFIIS/TCEA1 and favors 'Ser-2' phosphorylation of RPB1/POLR2A CTD. Expressed at high levels in brain and kidney.

It is found in the nucleus. The protein resides in the cytoplasm. Its subcellular location is the PML body. It carries out the reaction L-seryl-[protein] + ATP = O-phospho-L-seryl-[protein] + ADP + H(+). The enzyme catalyses L-threonyl-[protein] + ATP = O-phospho-L-threonyl-[protein] + ADP + H(+). The catalysed reaction is [DNA-directed RNA polymerase] + ATP = phospho-[DNA-directed RNA polymerase] + ADP + H(+). Its activity is regulated as follows. Activation by Thr-186 phosphorylation is calcium Ca(2+) signaling pathway-dependent; actively inactivated by dephosphorylation mediated by PPP1CA, PPM1A and PPM1B. Reversibly repressed by acetylation at Lys-44 and Lys-48. Its function is as follows. Protein kinase involved in the regulation of transcription. Member of the cyclin-dependent kinase pair (CDK9/cyclin-T) complex, also called positive transcription elongation factor b (P-TEFb), which facilitates the transition from abortive to productive elongation by phosphorylating the CTD (C-terminal domain) of the large subunit of RNA polymerase II (RNAP II) POLR2A, SUPT5H and RDBP. This complex is inactive when in the 7SK snRNP complex form. Phosphorylates EP300, MYOD1, RPB1/POLR2A and AR and the negative elongation factors DSIF and NELFE. Regulates cytokine inducible transcription networks by facilitating promoter recognition of target transcription factors (e.g. TNF-inducible RELA/p65 activation and IL-6-inducible STAT3 signaling). Promotes RNA synthesis in genetic programs for cell growth, differentiation and viral pathogenesis. P-TEFb is also involved in cotranscriptional histone modification, mRNA processing and mRNA export. Modulates a complex network of chromatin modifications including histone H2B monoubiquitination (H2Bub1), H3 lysine 4 trimethylation (H3K4me3) and H3K36me3; integrates phosphorylation during transcription with chromatin modifications to control co-transcriptional histone mRNA processing. The CDK9/cyclin-K complex has also a kinase activity towards CTD of RNAP II and can substitute for CDK9/cyclin-T P-TEFb in vitro. Replication stress response protein; the CDK9/cyclin-K complex is required for genome integrity maintenance, by promoting cell cycle recovery from replication arrest and limiting single-stranded DNA amount in response to replication stress, thus reducing the breakdown of stalled replication forks and avoiding DNA damage. In addition, probable function in DNA repair of isoform 2 via interaction with KU70/XRCC6. Promotes cardiac myocyte enlargement. RPB1/POLR2A phosphorylation on 'Ser-2' in CTD activates transcription. AR phosphorylation modulates AR transcription factor promoter selectivity and cell growth. DSIF and NELF phosphorylation promotes transcription by inhibiting their negative effect. The phosphorylation of MYOD1 enhances its transcriptional activity and thus promotes muscle differentiation. Catalyzes phosphorylation of KAT5, promoting KAT5 recruitment to chromatin and histone acetyltransferase activity. The chain is Cyclin-dependent kinase 9 (Cdk9) from Mus musculus (Mouse).